A 618-amino-acid chain; its full sequence is DNA mismatch repair protein MutL (618 aa).

Residues 367-381 show a composition bias toward low complexity; sequence EPTAAREPATPRYSG. The tract at residues 367-402 is disordered; sequence EPTAAREPATPRYSGGASGGNGGRQSAGGWPHAQPG. A compositionally biased stretch (gly residues) spans 382–392; that stretch reads GASGGNGGRQS.

The protein belongs to the DNA mismatch repair MutL/HexB family.

Its function is as follows. This protein is involved in the repair of mismatches in DNA. It is required for dam-dependent methyl-directed DNA mismatch repair. May act as a 'molecular matchmaker', a protein that promotes the formation of a stable complex between two or more DNA-binding proteins in an ATP-dependent manner without itself being part of a final effector complex. This chain is DNA mismatch repair protein MutL, found in Salmonella gallinarum (strain 287/91 / NCTC 13346).